The sequence spans 161 residues: Putative esterase C31F10.02 (161 aa).

Belongs to the thioesterase PaaI family.

This is Putative esterase C31F10.02 from Schizosaccharomyces pombe (strain 972 / ATCC 24843) (Fission yeast).